The chain runs to 452 residues: MTAKPTIAFSHLGCEKNRIDTEHMIGLLAEAGYGIDANEALADVVVVNTCSFIQAAREESVRTLVELAESGKKIVIAGCLAQHFQDQLLAELPEAIALVGTGDYHRIVDVLQRTESGERVNAISQEPSFIADENLPRYRTTTSAVAYLRVAEGCDYRCAFCIIPHLRGKQRSRSIESIVAEAKQLAAEGVQELVLISQITTNYGLDRYGKPMLAELLRQLGQVDVPWIRIHYAYPTGLTPEVIAAIRETHNVLPYLDLPLQHSHPEILKAMNRPWQGNVNDRIIEKLKEALPDAVLRTTFIAGFPGETEEHFRHLQQFIQRHEFDHVGVFAFSPEEGTAAIDLPNPVPDDVKEARRDALMATQQPIAERRNRAQIGRLVDVLIEQEHPSTGLKIGRSARFAPEVDGVVYVQGDAALGQLVTVRITDADIYDLHGEVASAADLFQASRQPSLA.

The region spanning 5–116 is the MTTase N-terminal domain; the sequence is PTIAFSHLGC…IVDVLQRTES (112 aa). [4Fe-4S] cluster-binding residues include Cys-14, Cys-50, Cys-79, Cys-154, Cys-158, and Cys-161. The Radical SAM core domain maps to 140–369; the sequence is TTTSAVAYLR…MATQQPIAER (230 aa). The region spanning 372 to 438 is the TRAM domain; that stretch reads RAQIGRLVDV…IYDLHGEVAS (67 aa).

It belongs to the methylthiotransferase family. RimO subfamily. [4Fe-4S] cluster is required as a cofactor.

It localises to the cytoplasm. The enzyme catalyses L-aspartate(89)-[ribosomal protein uS12]-hydrogen + (sulfur carrier)-SH + AH2 + 2 S-adenosyl-L-methionine = 3-methylsulfanyl-L-aspartate(89)-[ribosomal protein uS12]-hydrogen + (sulfur carrier)-H + 5'-deoxyadenosine + L-methionine + A + S-adenosyl-L-homocysteine + 2 H(+). Functionally, catalyzes the methylthiolation of an aspartic acid residue of ribosomal protein uS12. This chain is Ribosomal protein uS12 methylthiotransferase RimO, found in Synechococcus elongatus (strain ATCC 33912 / PCC 7942 / FACHB-805) (Anacystis nidulans R2).